Consider the following 437-residue polypeptide: Nuclear distribution protein PAC1 (437 aa).

A coiled-coil region spans residues 64-94 (LSVIRLQRKVMDLETRLEAAEREASSTHKAN). WD repeat units follow at residues 114 to 153 (LHKQPVNAVSFHPFHSTLASACEDGNIRIWDYELGEIETT), 156 to 217 (AHTR…ANVK), 221 to 260 (GHDHTISAVKFTASGNHVISASRDKTVRVWSVQSGYCVRT), 263 to 301 (GHTDWVKSCAALNEEFIFSAGIDHVTRVSEFVSGDGKMT), 304 to 356 (GHEH…LLIL), 358 to 397 (GHDNWVRGVVLHPAGRYLVSVSDDKTMRCWDLEQGGRCIR), and 401 to 437 (AHGHFVTCVAWAPNDVNGRVRCLVATGGVDGQVKVWQ). Residues 165 to 186 (DFSQPDTGASRDKSHDKPRADV) are disordered. Residues 173–186 (ASRDKSHDKPRADV) are compositionally biased toward basic and acidic residues.

This sequence belongs to the WD repeat LIS1/nudF family. In terms of assembly, self-associates. Interacts with NDL1 and dynein.

The protein resides in the cytoplasm. It localises to the cytoskeleton. It is found in the spindle pole. Its function is as follows. Positively regulates the activity of the minus-end directed microtubule motor protein dynein. Plays a central role in positioning the mitotic spindle at the bud neck during cell division. Targets cytoplasmic dynein to microtubule plus ends, thereby promoting dynein-mediated microtubule sliding along the bud cortex and consequently the movement of the mitotic spindle to the bud neck. The polypeptide is Nuclear distribution protein PAC1 (Yarrowia lipolytica (strain CLIB 122 / E 150) (Yeast)).